We begin with the raw amino-acid sequence, 110 residues long: Large ribosomal subunit protein uL22 (110 aa).

Belongs to the universal ribosomal protein uL22 family. Part of the 50S ribosomal subunit.

Its function is as follows. This protein binds specifically to 23S rRNA; its binding is stimulated by other ribosomal proteins, e.g. L4, L17, and L20. It is important during the early stages of 50S assembly. It makes multiple contacts with different domains of the 23S rRNA in the assembled 50S subunit and ribosome. The globular domain of the protein is located near the polypeptide exit tunnel on the outside of the subunit, while an extended beta-hairpin is found that lines the wall of the exit tunnel in the center of the 70S ribosome. This is Large ribosomal subunit protein uL22 from Mannheimia succiniciproducens (strain KCTC 0769BP / MBEL55E).